Reading from the N-terminus, the 241-residue chain is 6-phosphogluconolactonase (241 aa).

This sequence belongs to the glucosamine/galactosamine-6-phosphate isomerase family. 6-phosphogluconolactonase subfamily.

The catalysed reaction is 6-phospho-D-glucono-1,5-lactone + H2O = 6-phospho-D-gluconate + H(+). Its pathway is carbohydrate degradation; pentose phosphate pathway; D-ribulose 5-phosphate from D-glucose 6-phosphate (oxidative stage): step 2/3. Hydrolysis of 6-phosphogluconolactone to 6-phosphogluconate. This chain is 6-phosphogluconolactonase (pgl), found in Treponema pallidum (strain Nichols).